A 231-amino-acid chain; its full sequence is Putative cobalt transport protein CbiM 1 (231 aa).

6 helical membrane-spanning segments follow: residues 6–26 (GFLP…FLIY), 41–61 (VLPL…VDIP), 79–99 (FFGP…QALL), 107–127 (TLGA…WLVF), 136–156 (VPLG…TYLI), and 172–192 (LTAF…ISII).

This sequence belongs to the CbiM family. As to quaternary structure, forms an energy-coupling factor (ECF) transporter complex composed of an ATP-binding protein (A component, CbiO), a transmembrane protein (T component, CbiQ) and 2 possible substrate-capture proteins (S components, CbiM and CbiN) of unknown stoichimetry.

The protein resides in the cell membrane. It functions in the pathway cofactor biosynthesis; adenosylcobalamin biosynthesis. Its function is as follows. Part of the energy-coupling factor (ECF) transporter complex CbiMNOQ involved in cobalt import. This Methanocorpusculum labreanum (strain ATCC 43576 / DSM 4855 / Z) protein is Putative cobalt transport protein CbiM 1.